Consider the following 637-residue polypeptide: ATP-dependent zinc metalloprotease FtsH (637 aa).

At methionine 1–arginine 6 the chain is on the cytoplasmic side. Residues serine 7–serine 27 traverse the membrane as a helical segment. The Periplasmic portion of the chain corresponds to aspartate 28–threonine 103. The helical transmembrane segment at phenylalanine 104–phenylalanine 124 threads the bilayer. Residues methionine 125 to serine 637 lie on the Cytoplasmic side of the membrane. Glycine 195–threonine 202 serves as a coordination point for ATP. A Zn(2+)-binding site is contributed by histidine 417. The active site involves glutamate 418. The Zn(2+) site is built by histidine 421 and aspartate 495. The disordered stretch occupies residues glutamate 603–serine 637. Residues lysine 615–serine 637 are compositionally biased toward basic and acidic residues.

In the central section; belongs to the AAA ATPase family. The protein in the C-terminal section; belongs to the peptidase M41 family. As to quaternary structure, homohexamer. The cofactor is Zn(2+).

Its subcellular location is the cell inner membrane. Functionally, acts as a processive, ATP-dependent zinc metallopeptidase for both cytoplasmic and membrane proteins. Plays a role in the quality control of integral membrane proteins. This Rickettsia conorii (strain ATCC VR-613 / Malish 7) protein is ATP-dependent zinc metalloprotease FtsH.